Consider the following 389-residue polypeptide: Sinapine esterase (389 aa).

A signal peptide spans Met-1–Ser-25. Ser-41 acts as the Nucleophile in catalysis. N-linked (GlcNAc...) asparagine glycosylation is found at Asn-104, Asn-137, and Asn-320. Residues Asp-345 and His-348 contribute to the active site. N-linked (GlcNAc...) asparagine glycans are attached at residues Asn-372 and Asn-383.

The protein belongs to the 'GDSL' lipolytic enzyme family. Expressed in most tissues or organs of the mature seedlings. Not expressed in roots of mature seedlings.

The protein localises to the secreted. It carries out the reaction O-sinapoylcholine + H2O = (E)-sinapate + choline + H(+). Inhibited by PMSF. Functionally, sinapine esterase that catalyzes that hydrolysis of sinapine, releasing choline and sinapate. Sinapine (O-sinapoylcholine) is the predominant phenolic compound in a complex group of sinapate esters in seeds of oilseed rape (B.napus). Sinapine has antinutritive activity and prevents the use of seed protein for food and feed. Shows broad substrate specificity towards various other choline esters, including phosphatidylcholine. This Brassica napus (Rape) protein is Sinapine esterase.